Consider the following 254-residue polypeptide: Type III pantothenate kinase (254 aa).

6–13 (DVGNTNIV) serves as a coordination point for ATP. 107–110 (GADR) is a substrate binding site. Asp109 (proton acceptor) is an active-site residue. Asp129 provides a ligand contact to K(+). Position 132 (Thr132) interacts with ATP. Thr184 serves as a coordination point for substrate.

Belongs to the type III pantothenate kinase family. Homodimer. Requires NH4(+) as cofactor. The cofactor is K(+).

It is found in the cytoplasm. It catalyses the reaction (R)-pantothenate + ATP = (R)-4'-phosphopantothenate + ADP + H(+). The protein operates within cofactor biosynthesis; coenzyme A biosynthesis; CoA from (R)-pantothenate: step 1/5. Its function is as follows. Catalyzes the phosphorylation of pantothenate (Pan), the first step in CoA biosynthesis. This is Type III pantothenate kinase from Exiguobacterium sp. (strain ATCC BAA-1283 / AT1b).